The chain runs to 392 residues: GPI alpha-1,4-mannosyltransferase I, catalytic subunit (392 aa).

Residues 1–4 (MEAR) are Cytoplasmic-facing. The chain crosses the membrane as a helical span at residues 5–25 (VCVLFGAAALLRLLLLCVGVY). The Lumenal portion of the chain corresponds to 26-65 (QDQTLKLKYTDVDYHVFTDAARFITQGESPYRRSTFRYTP). A helical transmembrane segment spans residues 66 to 86 (LLALLLVPNVYLSLLFGKLLF). At 87 to 125 (GFCDLLSGLLMFRLLVLRGASHGSACVSCGLWLLNPLPM) the chain is on the cytoplasmic side. Residues 126 to 148 (AVSTRGNAESVLAVLVLSTLLCL) traverse the membrane as a helical segment. The Lumenal segment spans residues 149–156 (QLRKHTTA). A helical transmembrane segment spans residues 157 to 177 (ALLFGLSVHMKIYPVTYALPI). The Cytoplasmic segment spans residues 178 to 198 (ALALTAAPARGRGVLLRFFSP). A helical transmembrane segment spans residues 199-219 (ALLRFAAVSAAVFLSLGLIFY). Topologically, residues 220–261 (CRYGWEFLQEAYLYHLTRRDLRHNFSPFFYLQYVCAERCWSS) are lumenal. Residues 262-282 (GLLPLLLLPQLLLLLLASAAF) traverse the membrane as a helical segment. Residues 283-302 (SSDLPFCCFLHTAVFVSFNR) are Cytoplasmic-facing. Residues 303–323 (VCTSQYFLWYLCLLPVVLPRL) traverse the membrane as a helical segment. Over 324–330 (RLRLGRG) the chain is Lumenal. A helical transmembrane segment spans residues 331–351 (LLLLLLWLLLQGLWLAPAYLL). Residues 352-360 (EFQGWNSFS) are Cytoplasmic-facing. A helical transmembrane segment spans residues 361–381 (WIWAASLLFLLTNTFILAQII). Topologically, residues 382-392 (QHYRPHDRKAD) are lumenal.

The protein belongs to the PIGM family. Part of the glycosylphosphatidylinositol-mannosyltransferase I complex that is composed of PIGM and PIGX.

It localises to the endoplasmic reticulum membrane. It participates in glycolipid biosynthesis; glycosylphosphatidylinositol-anchor biosynthesis. In terms of biological role, catalytic subunit of the glycosylphosphatidylinositol-mannosyltransferase I complex which catalyzes the transfer of the first mannose, via an alpha-1,4 bond from a dolichol-phosphate-mannose (Dol-P-Man) to the glucosaminyl acyl phosphatidylinositol (GlcN-(acyl)PI) intermediate to generate alpha-D-Man-(1-&gt;4)-alpha-D-GlcN-(1-&gt;6)-(1-radyl,2-acyl-sn-glycero-3-phospho)-2-acyl-inositol and participates in the sixth step of the glycosylphosphatidylinositol-anchor biosynthesis. The protein is GPI alpha-1,4-mannosyltransferase I, catalytic subunit of Danio rerio (Zebrafish).